A 233-amino-acid chain; its full sequence is Large ribosomal subunit protein eL6y (233 aa).

Over residues 48-72 (HDAKSKVDAPVEKPPKFYPAEDVKK) the composition is skewed to basic and acidic residues. The tract at residues 48–82 (HDAKSKVDAPVEKPPKFYPAEDVKKPLPNRRTAKP) is disordered.

This sequence belongs to the eukaryotic ribosomal protein eL6 family.

This chain is Large ribosomal subunit protein eL6y (RPL6B), found in Arabidopsis thaliana (Mouse-ear cress).